The following is a 1834-amino-acid chain: Non-reducing polyketide synthase spyA (1834 aa).

Positions 91–255 (LAPLTVIIHL…TRIPIYGRYH (165 aa)) constitute a Starter acyltransferase (SAT) domain. Residues 385-801 (EHSIAVIGAA…GNNTAVIVCE (417 aa)) enclose the Ketosynthase family 3 (KS3) domain. Active-site for beta-ketoacyl synthase activity residues include Cys551, His687, and His724. The Malonyl-CoA:ACP transacylase (MAT) domain occupies 919–1164 (YEGSSLLRSH…KELGPCTWVE (246 aa)). The tract at residues 1269 to 1398 (PLVYLLRDEG…GVISLRQERH (130 aa)) is N-terminal hotdog fold. A PKS/mFAS DH domain is found at 1269 to 1577 (PLVYLLRDEG…FVRITASSLN (309 aa)). Positions 1269–1577 (PLVYLLRDEG…FVRITASSLN (309 aa)) are product template (PT) domain. The tract at residues 1428–1577 (AISLKEGIIY…FVRITASSLN (150 aa)) is C-terminal hotdog fold. The Carrier 1 domain maps to 1616–1690 (SDILSILSHL…TLCQEIQTQR (75 aa)). Ser1650 carries the O-(pantetheine 4'-phosphoryl)serine modification. Positions 1693–1720 (RLARASRTTTATRNTSFSLGRRTSSTES) are disordered. Residues 1697 to 1710 (ASRTTTATRNTSFS) show a composition bias toward low complexity. The 77-residue stretch at 1731 to 1807 (SKSAAVLAQL…GLARLILASE (77 aa)) folds into the Carrier 2 domain. Position 1767 is an O-(pantetheine 4'-phosphoryl)serine (Ser1767).

The cofactor is pantetheine 4'-phosphate.

The enzyme catalyses 2 malonyl-CoA + acetyl-CoA + 2 H(+) = triacetate lactone + 2 CO2 + 3 CoA. The protein operates within secondary metabolite biosynthesis; terpenoid biosynthesis. In terms of biological role, non-reducing polyketide synthase; part of the gene cluster that mediates the biosynthesis of meroterpenoids called sartorypyrones. The biosynthesis of sartorypyrones begins with the production of triacetic acid lactone (TAL) by the NR-PKS spyA using one molecule of acetyl-CoA and two molecules of malonyl-CoA. As spyA lacks a thioesterase (TE) domain, TAL is likely generated through self-release from spyA by spontaneous lactonization. After production of TAL, the prenyltransferase spyF then conjugates geranylgeranyl pyrophosphate (GGPP) to TAL to form geranylgeranyl-triacetate lactone, for which the pathway-specific geranylgeranyl pyrophosphate synthase (GGPS) spyE is required to provide GGPP. Subsequently, geranylgeranyl-triacetate lactone is epoxidized at the terminal olein by the FAD-dependent monooxygenase spyC, followed by cyclization of the terpenoid component catalyzed by the terpene cyclase spyD to produce both the bicyclic sartorypyrone F and the monocyclic sartorypyrone D. Finally, the last step of the biosynthesis involves the acetylation of the meroterpenoids sartorypyrones D and F by the acetyltransferase SpyB to produce sartorypyrones A and G, respectively. The protein is Non-reducing polyketide synthase spyA of Aspergillus fumigatus (strain ATCC MYA-4609 / CBS 101355 / FGSC A1100 / Af293) (Neosartorya fumigata).